The primary structure comprises 556 residues: Adenine deaminase (556 aa).

Belongs to the metallo-dependent hydrolases superfamily. Adenine deaminase family. Mn(2+) serves as cofactor.

It carries out the reaction adenine + H2O + H(+) = hypoxanthine + NH4(+). This is Adenine deaminase from Methanocaldococcus jannaschii (strain ATCC 43067 / DSM 2661 / JAL-1 / JCM 10045 / NBRC 100440) (Methanococcus jannaschii).